The following is a 203-amino-acid chain: Thymidylate kinase (203 aa).

10–17 (GIDGSGKS) is a binding site for ATP.

Belongs to the thymidylate kinase family.

It catalyses the reaction dTMP + ATP = dTDP + ADP. Its function is as follows. Phosphorylation of dTMP to form dTDP in both de novo and salvage pathways of dTTP synthesis. This Brachyspira hyodysenteriae (strain ATCC 49526 / WA1) protein is Thymidylate kinase.